The chain runs to 69 residues: Cytochrome c oxidase subunit 8A, mitochondrial (69 aa).

Residues 1–25 (MSVLTPLLLRGLTGSARRLPVLRAQ) constitute a mitochondrion transit peptide. The SIFI-degron signature appears at 2-19 (SVLTPLLLRGLTGSARRL). The Mitochondrial matrix segment spans residues 26–36 (VHSKPPREKLG). A helical membrane pass occupies residues 37–60 (TMDVAIGLTSCFVCFLLPSGWVLS). Residues 61-69 (HLETYKKRE) are Mitochondrial intermembrane-facing.

This sequence belongs to the cytochrome c oxidase VIII family. Component of the cytochrome c oxidase (complex IV, CIV), a multisubunit enzyme composed of 14 subunits. The complex is composed of a catalytic core of 3 subunits MT-CO1, MT-CO2 and MT-CO3, encoded in the mitochondrial DNA, and 11 supernumerary subunits COX4I, COX5A, COX5B, COX6A, COX6B, COX6C, COX7A, COX7B, COX7C, COX8 and NDUFA4, which are encoded in the nuclear genome. The complex exists as a monomer or a dimer and forms supercomplexes (SCs) in the inner mitochondrial membrane with NADH-ubiquinone oxidoreductase (complex I, CI) and ubiquinol-cytochrome c oxidoreductase (cytochrome b-c1 complex, complex III, CIII), resulting in different assemblies (supercomplex SCI(1)III(2)IV(1) and megacomplex MCI(2)III(2)IV(2)). In response to mitochondrial stress, the precursor protein is ubiquitinated by the SIFI complex in the cytoplasm before mitochondrial import, leading to its degradation. Within the SIFI complex, UBR4 initiates ubiquitin chain that are further elongated or branched by KCMF1.

It localises to the mitochondrion inner membrane. It participates in energy metabolism; oxidative phosphorylation. In terms of biological role, component of the cytochrome c oxidase, the last enzyme in the mitochondrial electron transport chain which drives oxidative phosphorylation. The respiratory chain contains 3 multisubunit complexes succinate dehydrogenase (complex II, CII), ubiquinol-cytochrome c oxidoreductase (cytochrome b-c1 complex, complex III, CIII) and cytochrome c oxidase (complex IV, CIV), that cooperate to transfer electrons derived from NADH and succinate to molecular oxygen, creating an electrochemical gradient over the inner membrane that drives transmembrane transport and the ATP synthase. Cytochrome c oxidase is the component of the respiratory chain that catalyzes the reduction of oxygen to water. Electrons originating from reduced cytochrome c in the intermembrane space (IMS) are transferred via the dinuclear copper A center (CU(A)) of subunit 2 and heme A of subunit 1 to the active site in subunit 1, a binuclear center (BNC) formed by heme A3 and copper B (CU(B)). The BNC reduces molecular oxygen to 2 water molecules using 4 electrons from cytochrome c in the IMS and 4 protons from the mitochondrial matrix. In Eulemur fulvus fulvus (Brown lemur), this protein is Cytochrome c oxidase subunit 8A, mitochondrial (COX8A).